Reading from the N-terminus, the 71-residue chain is Beta-defensin 9 (71 aa).

Positions 1–23 (MRTLCSLLLICCLLFSYDTPVVG) are cleaved as a signal peptide. 3 disulfide bridges follow: cysteine 37–cysteine 66, cysteine 44–cysteine 59, and cysteine 49–cysteine 67.

Belongs to the beta-defensin family.

It localises to the secreted. In terms of biological role, has antibacterial activity. This Rattus norvegicus (Rat) protein is Beta-defensin 9 (Defb9).